The chain runs to 110 residues: Coiled-coil-helix-coiled-coil-helix domain-containing protein 5 (110 aa).

Met-1 is modified (N-acetylmethionine). CHCH domains follow at residues 9–52 (ARYC…PIIR) and 55–97 (RQAC…QPPS). Short sequence motifs (cx9C motif) lie at residues 12–22 (CSRELDQYGQC), 34–44 (CHHLKMSIARC), 58–68 (CAEPFEAFEKC), and 79–89 (CAEHMRRFLQC). 4 disulfide bridges follow: Cys-12–Cys-44, Cys-22–Cys-34, Cys-58–Cys-89, and Cys-68–Cys-79.

Monomer.

Its subcellular location is the mitochondrion intermembrane space. This chain is Coiled-coil-helix-coiled-coil-helix domain-containing protein 5 (Chchd5), found in Mus musculus (Mouse).